Reading from the N-terminus, the 552-residue chain is Glucose-6-phosphate isomerase (552 aa).

The active-site Proton donor is the Glu-357. Active-site residues include His-388 and Lys-516. Residues 525-552 form a disordered region; that stretch reads ELASTKPPKHDSSTNALIERYRTRGCRS.

It belongs to the GPI family.

The protein localises to the cytoplasm. It carries out the reaction alpha-D-glucose 6-phosphate = beta-D-fructose 6-phosphate. It functions in the pathway carbohydrate biosynthesis; gluconeogenesis. Its pathway is carbohydrate degradation; glycolysis; D-glyceraldehyde 3-phosphate and glycerone phosphate from D-glucose: step 2/4. Its function is as follows. Catalyzes the reversible isomerization of glucose-6-phosphate to fructose-6-phosphate. This chain is Glucose-6-phosphate isomerase, found in Laribacter hongkongensis (strain HLHK9).